Here is a 549-residue protein sequence, read N- to C-terminus: SET and MYND domain-containing protein DDB_G0277331 (549 aa).

An SET domain is found at 27-283 (KGIELRYCDG…KDEELFINYS (257 aa)). Positions 71, 74, 90, 93, 99, 103, 111, and 115 each coordinate Zn(2+). The MYND-type zinc-finger motif lies at 71 to 115 (CDECLKNKLDLEEGKTLKRCSNCKLVYYCSTDCQTKAWKIHKQEC). The stretch at 340-401 (NINNNNNNNN…IIKNLQNKLS (62 aa)) forms a coiled coil.

This sequence belongs to the class V-like SAM-binding methyltransferase superfamily.

Its function is as follows. Probable methyltransferase. This is SET and MYND domain-containing protein DDB_G0277331 from Dictyostelium discoideum (Social amoeba).